The primary structure comprises 124 residues: Histone H2A (124 aa).

The segment covering 1-18 has biased composition (basic residues); sequence MSGRGKGGKAKGKSKTRS. The interval 1-23 is disordered; sequence MSGRGKGGKAKGKSKTRSSRAGL. Serine 2 bears the N-acetylserine mark. Position 2 is a phosphoserine (serine 2). Residue glutamine 104 is modified to N5-methylglutamine.

This sequence belongs to the histone H2A family. The nucleosome is a histone octamer containing two molecules each of H2A, H2B, H3 and H4 assembled in one H3-H4 heterotetramer and two H2A-H2B heterodimers. The octamer wraps approximately 147 bp of DNA. Post-translationally, phosphorylation of Ser-2 directly represses transcription.

The protein localises to the nucleus. It localises to the chromosome. Functionally, core component of nucleosome. Nucleosomes wrap and compact DNA into chromatin, limiting DNA accessibility to the cellular machineries which require DNA as a template. Histones thereby play a central role in transcription regulation, DNA repair, DNA replication and chromosomal stability. DNA accessibility is regulated via a complex set of post-translational modifications of histones, also called histone code, and nucleosome remodeling. The chain is Histone H2A from Platynereis dumerilii (Dumeril's clam worm).